Reading from the N-terminus, the 373-residue chain is Superinfection exclusion protein (373 aa).

Residues 1 to 15 (MIVLLILSLACTAFT) form the signal peptide.

The protein belongs to the serpin family. Orthopoxvirus OPG040 subfamily. Interacts with A56 protein.

It localises to the virion membrane. It is found in the host cell membrane. In terms of biological role, prevents cell to cell fusion via its interaction with A56 protein. The A56-K2 complex associates with components of the entry fusion complex (EFC) presumably to avoid superinfection and syncytium formation. This Homo sapiens (Human) protein is Superinfection exclusion protein (OPG040).